The chain runs to 117 residues: Large ribosomal subunit protein bL20 (117 aa).

It belongs to the bacterial ribosomal protein bL20 family.

Binds directly to 23S ribosomal RNA and is necessary for the in vitro assembly process of the 50S ribosomal subunit. It is not involved in the protein synthesizing functions of that subunit. In Rickettsia rickettsii (strain Iowa), this protein is Large ribosomal subunit protein bL20.